The following is a 336-amino-acid chain: Foldase protein PrsA (336 aa).

The signal sequence occupies residues 1-22 (MKSAKKLLSVLCLGIFILTFTA). Cys23 carries N-palmitoyl cysteine lipidation. A lipid anchor (S-diacylglycerol cysteine) is attached at Cys23. In terms of domain architecture, PpiC spans 194-286 (PNTMNVSHIL…FGYHIIKINS (93 aa)).

This sequence belongs to the PrsA family.

The protein resides in the cell membrane. It carries out the reaction [protein]-peptidylproline (omega=180) = [protein]-peptidylproline (omega=0). Plays a major role in protein secretion by helping the post-translocational extracellular folding of several secreted proteins. The protein is Foldase protein PrsA of Clostridium botulinum (strain Okra / Type B1).